The chain runs to 496 residues: Glycerol kinase (496 aa).

Thr-14 contributes to the ADP binding site. Residues Thr-14 and Thr-15 each coordinate ATP. A sn-glycerol 3-phosphate-binding site is contributed by Thr-14. Arg-84, Glu-85, Tyr-136, and Asp-246 together coordinate sn-glycerol 3-phosphate. 5 residues coordinate glycerol: Arg-84, Glu-85, Tyr-136, Asp-246, and Gln-247. ADP is bound by residues Thr-268 and Gly-313. ATP-binding residues include Thr-268, Gly-313, Gln-317, and Gly-414. Residues Gly-414 and Asn-418 each contribute to the ADP site.

This sequence belongs to the FGGY kinase family.

It carries out the reaction glycerol + ATP = sn-glycerol 3-phosphate + ADP + H(+). It functions in the pathway polyol metabolism; glycerol degradation via glycerol kinase pathway; sn-glycerol 3-phosphate from glycerol: step 1/1. With respect to regulation, inhibited by fructose 1,6-bisphosphate (FBP). Its function is as follows. Key enzyme in the regulation of glycerol uptake and metabolism. Catalyzes the phosphorylation of glycerol to yield sn-glycerol 3-phosphate. In Myxococcus xanthus (strain DK1622), this protein is Glycerol kinase.